We begin with the raw amino-acid sequence, 72 residues long: Disintegrin sasaimin (72 aa).

Residues Glu1–His72 form the Disintegrin domain. Disulfide bonds link Cys6–Cys21, Cys8–Cys16, Cys15–Cys38, Cys29–Cys35, Cys34–Cys59, and Cys47–Cys66. Residues Arg51–Asp53 carry the Cell attachment site motif.

It belongs to the venom metalloproteinase (M12B) family. P-II subfamily. P-IIa sub-subfamily. Monomer. Expressed by the venom gland.

It is found in the secreted. Inhibits ADP- (IC(50)=66 nM) and collagen-induced (IC(50)=100 nM) aggregation of human platelets. In vitro, inhibits adhesion of endothelial cells to vitronectin, type-I collagen and, to a lower degree, fibronectin and laminin. The sequence is that of Disintegrin sasaimin from Cerrophidion sasai (Costa Rica montane pitviper).